Reading from the N-terminus, the 122-residue chain is Large ribosomal subunit protein uL14 (122 aa).

This sequence belongs to the universal ribosomal protein uL14 family. Part of the 50S ribosomal subunit. Forms a cluster with proteins L3 and L19. In the 70S ribosome, L14 and L19 interact and together make contacts with the 16S rRNA in bridges B5 and B8.

Its function is as follows. Binds to 23S rRNA. Forms part of two intersubunit bridges in the 70S ribosome. The sequence is that of Large ribosomal subunit protein uL14 from Fusobacterium nucleatum subsp. nucleatum (strain ATCC 25586 / DSM 15643 / BCRC 10681 / CIP 101130 / JCM 8532 / KCTC 2640 / LMG 13131 / VPI 4355).